Consider the following 131-residue polypeptide: Fumarate reductase subunit C (131 aa).

Helical transmembrane passes span glutamate 30 to leucine 50, phenylalanine 63 to histidine 83, and isoleucine 109 to leucine 129.

This sequence belongs to the FrdC family. In terms of assembly, part of an enzyme complex containing four subunits: a flavoprotein (FrdA), an iron-sulfur protein (FrdB), and two hydrophobic anchor proteins (FrdC and FrdD).

It localises to the cell inner membrane. Its function is as follows. Two distinct, membrane-bound, FAD-containing enzymes are responsible for the catalysis of fumarate and succinate interconversion; fumarate reductase is used in anaerobic growth, and succinate dehydrogenase is used in aerobic growth. Anchors the catalytic components of the fumarate reductase complex to the cell inner membrane, binds quinones. The polypeptide is Fumarate reductase subunit C (Escherichia coli O17:K52:H18 (strain UMN026 / ExPEC)).